Consider the following 153-residue polypeptide: Small ribosomal subunit protein uS17 (153 aa).

It belongs to the universal ribosomal protein uS17 family.

This chain is Small ribosomal subunit protein uS17 (RpS11), found in Anopheles gambiae (African malaria mosquito).